Here is a 555-residue protein sequence, read N- to C-terminus: Hdr-like menaquinol oxidoreductase iron-sulfur subunit 2 (555 aa).

2 4Fe-4S ferredoxin-type domains span residues 82 to 111 (RSFK…GDPK) and 151 to 180 (KELY…AEIV). Residues Cys-91, Cys-94, Cys-97, Cys-101, Cys-160, Cys-163, Cys-166, and Cys-170 each contribute to the [4Fe-4S] cluster site.

As to quaternary structure, consists of five subunits: an integral membrane subunit, a cytochrome b-like subunit, a cytochrome c subunit and two iron-sulfur subunits. The cofactor is [4Fe-4S] cluster.

Its subcellular location is the cell membrane. In terms of biological role, has menaquinol-oxidizing activity. HmeC and HmeD subunits may together mediate electron transfer from menaquinol to an unidentified electron acceptor on the cytoplasmic side of the membrane. The polypeptide is Hdr-like menaquinol oxidoreductase iron-sulfur subunit 2 (hmeD) (Archaeoglobus fulgidus (strain ATCC 49558 / DSM 4304 / JCM 9628 / NBRC 100126 / VC-16)).